The following is a 79-amino-acid chain: Acyl carrier protein (79 aa).

One can recognise a Carrier domain in the interval 2–77 (ENIEQRVKKI…QAIDYVTAHL (76 aa)). Ser37 is modified (O-(pantetheine 4'-phosphoryl)serine).

Belongs to the acyl carrier protein (ACP) family. Post-translationally, 4'-phosphopantetheine is transferred from CoA to a specific serine of apo-ACP by AcpS. This modification is essential for activity because fatty acids are bound in thioester linkage to the sulfhydryl of the prosthetic group.

It localises to the cytoplasm. It functions in the pathway lipid metabolism; fatty acid biosynthesis. Functionally, carrier of the growing fatty acid chain in fatty acid biosynthesis. The sequence is that of Acyl carrier protein from Laribacter hongkongensis (strain HLHK9).